A 526-amino-acid chain; its full sequence is ESX-1 secretion-associated protein EspB (526 aa).

A compositionally biased stretch (basic and acidic residues) spans 1–23; that stretch reads MSEELKYELPGLERKAHECESTR. Disordered regions lie at residues 1-35, 91-110, and 271-526; these read MSEE…KPDE, RQMN…VPDM, and QIQE…GKQQ. Gly residues predominate over residues 303–328; it reads GGPGGPGSGSGGGSGGGASGGSGGGT. The segment covering 335–362 has biased composition (low complexity); that stretch reads PSTDPSMSPMSTNSAGEEQSSGSPSSGG. Residues 363 to 387 show a composition bias toward gly residues; the sequence is SSSGGSPSGGSPSGGGAPSSGGMPE. The span at 393 to 405 shows a compositional bias: low complexity; that stretch reads DMPGGPDIPGLDD. The span at 413-429 shows a compositional bias: gly residues; sequence AGGGGGGGVGGGGGGGM. The span at 430–440 shows a compositional bias: low complexity; that stretch reads PAAPLGPAVGA. Positions 451-484 are enriched in gly residues; that stretch reads RGGGVGVPTGTGGGAGGMMGGGMGGMGAGHGQGQ. A compositionally biased stretch (basic and acidic residues) spans 485 to 508; the sequence is GKEKKRDPKLAPDEDLYTEDRAHS.

It belongs to the EspB family.

It is found in the secreted. Involved in DNA conjugation, at least in the recipient strain. This is ESX-1 secretion-associated protein EspB from Mycolicibacterium smegmatis (strain MKD8) (Mycobacterium smegmatis).